A 747-amino-acid polypeptide reads, in one-letter code: DNA ligase 1 (747 aa).

A disordered region spans residues 1–84 (MQKSITSFFK…KEVDDKTTDK (84 aa)). Phosphoserine occurs at positions 18, 20, 42, 44, 46, 60, and 65. The span at 26-42 (PKIDAKTELPDEPHIKS) shows a compositional bias: basic and acidic residues. Basic and acidic residues predominate over residues 60-84 (SEEKTSPVKNVKKEPKEVDDKTTDK). The active-site N6-AMP-lysine intermediate is the lysine 395. The segment covering 725–740 (QSQDQVKNNQKSSTQM) has biased composition (polar residues). Residues 725–747 (QSQDQVKNNQKSSTQMEMEDEFY) form a disordered region.

Belongs to the ATP-dependent DNA ligase family.

It is found in the nucleus. It carries out the reaction ATP + (deoxyribonucleotide)n-3'-hydroxyl + 5'-phospho-(deoxyribonucleotide)m = (deoxyribonucleotide)n+m + AMP + diphosphate.. In terms of biological role, DNA ligase that seals nicks in double-stranded DNA during DNA replication, DNA recombination and DNA repair. This is DNA ligase 1 from Drosophila melanogaster (Fruit fly).